The sequence spans 629 residues: tRNA uridine 5-carboxymethylaminomethyl modification enzyme MnmG (629 aa).

FAD contacts are provided by residues 14–19 (GAGHAG), Val-126, and Ser-181. 273–287 (GPRYCPSIEDKVVRF) serves as a coordination point for NAD(+). An FAD-binding site is contributed by Gln-370.

It belongs to the MnmG family. Homodimer. Heterotetramer of two MnmE and two MnmG subunits. FAD is required as a cofactor.

Its subcellular location is the cytoplasm. Its function is as follows. NAD-binding protein involved in the addition of a carboxymethylaminomethyl (cmnm) group at the wobble position (U34) of certain tRNAs, forming tRNA-cmnm(5)s(2)U34. The polypeptide is tRNA uridine 5-carboxymethylaminomethyl modification enzyme MnmG (Geobacillus thermodenitrificans (strain NG80-2)).